Consider the following 322-residue polypeptide: MMLPSVIAPPAMYPSFLRPSSALSLPPALQSAFTTHSSFLVEDLLRISRPAAFMHRSIPSPSASPPATGVTTLNTTSSAVHVAMSTALAKRSSSPQTSISSDPNYLKFGVNAILASTTRNASPPPPVQGMNAKTFPFPCFDGSFHPFIRASYFPASSSAVPIPGTFAWPLTARGKPRRGMLRRAVFSDVQRKALEKMFQKQKYISKPDRKKLATKLGLKDSQVKIWFQNRRMKWRNSKERELLSSGGCREQTLPTKMNPNPDLSDVGKRFEHEAVLRESPRAPFCQSRGDHEFNADLHFKSPSISSKHSDFSESEDEEITVS.

The homeobox DNA-binding region spans 179-238 (GMLRRAVFSDVQRKALEKMFQKQKYISKPDRKKLATKLGLKDSQVKIWFQNRRMKWRNSK). Disordered regions lie at residues 238–266 (KERELLSSGGCREQTLPTKMNPNPDLSDV) and 296–322 (DLHFKSPSISSKHSDFSESEDEEITVS). Positions 312–322 (SESEDEEITVS) are enriched in acidic residues.

This sequence belongs to the H2.0 homeobox family.

Its subcellular location is the nucleus. The protein is Homeobox protein DBX1-B (dbx1b) of Danio rerio (Zebrafish).